We begin with the raw amino-acid sequence, 228 residues long: Ribonuclease 3 1 (228 aa).

One can recognise an RNase III domain in the interval 1–124 (MYKLLMFRDD…VIGAYYLDNN (124 aa)). Position 37 (E37) interacts with Mg(2+). Residue D41 is part of the active site. Mg(2+)-binding residues include S110 and E113. The active site involves E113. Residues 153-223 (DSKNRFQEWV…AENALANLNK (71 aa)) enclose the DRBM domain.

This sequence belongs to the ribonuclease III family. Homodimer. The cofactor is Mg(2+).

The protein localises to the cytoplasm. It catalyses the reaction Endonucleolytic cleavage to 5'-phosphomonoester.. Its function is as follows. Digests double-stranded RNA. Involved in the processing of primary rRNA transcript to yield the immediate precursors to the large and small rRNAs (23S and 16S). Processes some mRNAs, and tRNAs when they are encoded in the rRNA operon. Processes pre-crRNA and tracrRNA of type II CRISPR loci if present in the organism. This chain is Ribonuclease 3 1, found in Nostoc sp. (strain PCC 7120 / SAG 25.82 / UTEX 2576).